We begin with the raw amino-acid sequence, 395 residues long: Synaptotagmin-8 (395 aa).

The Extracellular segment spans residues 1–44 (MQADRSMKMGHALNPFSTSAPLDATAGPSLIPDLITRIPWPRWT). A helical; Signal-anchor for type III membrane protein membrane pass occupies residues 45–65 (LFIAILAAGVLLVSCLLCVIC). Topologically, residues 66-395 (CYCHRHRHRK…PRLPLLRPRS (330 aa)) are cytoplasmic. 2 consecutive C2 domains span residues 113–229 (QWGR…ESWY) and 241–370 (QMGE…AQWH).

Belongs to the synaptotagmin family. In terms of assembly, homodimer or homooligomer. Homodimerization and homooligomerization do not depend on Ca(2+). Interacts with SYNCRIP isoform 2 C-terminus. Binds inositol 1,3,4,5-tetrakisphosphate (IP4). Binds to AP2 in a Ca(2+)-independent manner. Interacts with STX1A, STX1B and STX2; the interaction is Ca(2+)-dependent. In terms of tissue distribution, ubiquitous. Detected in testis and brain. Expressed in primary neurons, neuroendocrine and endocrine cells.

The protein resides in the cytoplasm. It localises to the cell membrane. The protein localises to the cytoplasmic vesicle. It is found in the secretory vesicle. Its subcellular location is the acrosome. Functionally, involved in the trafficking and exocytosis of secretory vesicles in non-neuronal tissues. Mediates Ca(2+)-regulation of exocytosis acrosomal reaction in sperm. May mediate Ca(2+)-regulation of exocytosis in insulin secreted cells. This is Synaptotagmin-8 (Syt8) from Mus musculus (Mouse).